The chain runs to 191 residues: Flavin prenyltransferase UbiX (191 aa).

Residues 13-15, Thr39, 90-93, and Arg125 contribute to the FMN site; these read GAS and TMKT. Residues Tyr155 and Lys171 each contribute to the dimethylallyl phosphate site.

It belongs to the UbiX/PAD1 family.

The catalysed reaction is dimethylallyl phosphate + FMNH2 = prenylated FMNH2 + phosphate. Flavin prenyltransferase that catalyzes the synthesis of the prenylated FMN cofactor (prenyl-FMN) for 4-hydroxy-3-polyprenylbenzoic acid decarboxylase UbiD. The prenyltransferase is metal-independent and links a dimethylallyl moiety from dimethylallyl monophosphate (DMAP) to the flavin N5 and C6 atoms of FMN. The protein is Flavin prenyltransferase UbiX of Methanothermobacter thermautotrophicus (strain ATCC 29096 / DSM 1053 / JCM 10044 / NBRC 100330 / Delta H) (Methanobacterium thermoautotrophicum).